A 179-amino-acid polypeptide reads, in one-letter code: UPF0302 protein BLi02393/BL02764 (179 aa).

This sequence belongs to the UPF0302 family.

The protein is UPF0302 protein BLi02393/BL02764 of Bacillus licheniformis (strain ATCC 14580 / DSM 13 / JCM 2505 / CCUG 7422 / NBRC 12200 / NCIMB 9375 / NCTC 10341 / NRRL NRS-1264 / Gibson 46).